We begin with the raw amino-acid sequence, 36 residues long: Photosystem II reaction center protein M (36 aa).

A helical membrane pass occupies residues 5 to 25 (ILAFIATALFILVPTAFLLII).

This sequence belongs to the PsbM family. As to quaternary structure, PSII is composed of 1 copy each of membrane proteins PsbA, PsbB, PsbC, PsbD, PsbE, PsbF, PsbH, PsbI, PsbJ, PsbK, PsbL, PsbM, PsbT, PsbX, PsbY, PsbZ, Psb30/Ycf12, at least 3 peripheral proteins of the oxygen-evolving complex and a large number of cofactors. It forms dimeric complexes.

The protein resides in the plastid. It is found in the chloroplast thylakoid membrane. One of the components of the core complex of photosystem II (PSII). PSII is a light-driven water:plastoquinone oxidoreductase that uses light energy to abstract electrons from H(2)O, generating O(2) and a proton gradient subsequently used for ATP formation. It consists of a core antenna complex that captures photons, and an electron transfer chain that converts photonic excitation into a charge separation. This subunit is found at the monomer-monomer interface. The sequence is that of Photosystem II reaction center protein M from Panax ginseng (Korean ginseng).